The primary structure comprises 527 residues: Coatomer subunit delta (527 aa).

Over residues 166–175 (IDKSKIEKNK) the composition is skewed to basic and acidic residues. Disordered regions lie at residues 166-187 (IDKS…SMGS) and 217-250 (SDVD…KSGK). Low complexity-rich tracts occupy residues 177–187 (GGFSSMGSMGS) and 239–250 (KSSGMKLGKSGK). The 246-residue stretch at 282–527 (TDPFTLTVEE…QLIAQNYQVI (246 aa)) folds into the MHD domain.

It belongs to the adaptor complexes medium subunit family. Delta-COP subfamily. Oligomeric complex that consists of at least the alpha, beta, beta', gamma, delta, epsilon and zeta subunits.

It localises to the cytoplasm. The protein localises to the golgi apparatus membrane. The protein resides in the cytoplasmic vesicle. It is found in the COPI-coated vesicle membrane. Functionally, the coatomer is a cytosolic protein complex that binds to dilysine motifs and reversibly associates with Golgi non-clathrin-coated vesicles, which further mediate biosynthetic protein transport from the ER, via the Golgi up to the trans Golgi network. Coatomer complex is required for budding from Golgi membranes, and is essential for the retrograde Golgi-to-ER transport of dilysine-tagged proteins. The polypeptide is Coatomer subunit delta (Arabidopsis thaliana (Mouse-ear cress)).